Here is a 432-residue protein sequence, read N- to C-terminus: Gamma-glutamyl phosphate reductase (432 aa).

The protein belongs to the gamma-glutamyl phosphate reductase family.

The protein resides in the cytoplasm. The catalysed reaction is L-glutamate 5-semialdehyde + phosphate + NADP(+) = L-glutamyl 5-phosphate + NADPH + H(+). Its pathway is amino-acid biosynthesis; L-proline biosynthesis; L-glutamate 5-semialdehyde from L-glutamate: step 2/2. In terms of biological role, catalyzes the NADPH-dependent reduction of L-glutamate 5-phosphate into L-glutamate 5-semialdehyde and phosphate. The product spontaneously undergoes cyclization to form 1-pyrroline-5-carboxylate. The sequence is that of Gamma-glutamyl phosphate reductase from Corynebacterium melassecola.